The primary structure comprises 374 residues: Histidine biosynthesis bifunctional protein HisB (374 aa).

A histidinol-phosphatase region spans residues 1 to 183; sequence MKKKVLFIDR…RVAEFLFAGE (183 aa). Catalysis depends on D9, which acts as the Nucleophile. D9, D11, and D131 together coordinate Mg(2+). Residue D11 is the Proton donor of the active site. The interval 184-374 is imidazoleglycerol-phosphate dehydratase; the sequence is RRAEIRRTTK…FELPSSKGVL (191 aa).

In the N-terminal section; belongs to the histidinol-phosphatase family. It in the C-terminal section; belongs to the imidazoleglycerol-phosphate dehydratase family. Mg(2+) serves as cofactor.

The protein localises to the cytoplasm. The enzyme catalyses D-erythro-1-(imidazol-4-yl)glycerol 3-phosphate = 3-(imidazol-4-yl)-2-oxopropyl phosphate + H2O. It catalyses the reaction L-histidinol phosphate + H2O = L-histidinol + phosphate. It functions in the pathway amino-acid biosynthesis; L-histidine biosynthesis; L-histidine from 5-phospho-alpha-D-ribose 1-diphosphate: step 6/9. Its pathway is amino-acid biosynthesis; L-histidine biosynthesis; L-histidine from 5-phospho-alpha-D-ribose 1-diphosphate: step 8/9. The chain is Histidine biosynthesis bifunctional protein HisB from Bacteroides fragilis (strain ATCC 25285 / DSM 2151 / CCUG 4856 / JCM 11019 / LMG 10263 / NCTC 9343 / Onslow / VPI 2553 / EN-2).